A 395-amino-acid chain; its full sequence is Tryptophan--tRNA ligase (395 aa).

ATP is bound by residues Arg8–Thr10 and Gly16–His17. A 'HIGH' region motif is present at residues Pro9–His17. Positions Arg117–Leu179 are insert. L-tryptophan is bound at residue Asp204. ATP-binding positions include Gly216–Asp218, Ile254, and Lys261–Ser265. Positions Lys261–Ser265 match the 'KMSKS' region motif.

The protein belongs to the class-I aminoacyl-tRNA synthetase family. In terms of assembly, homodimer.

The protein localises to the cytoplasm. The enzyme catalyses tRNA(Trp) + L-tryptophan + ATP = L-tryptophyl-tRNA(Trp) + AMP + diphosphate + H(+). Functionally, catalyzes the attachment of tryptophan to tRNA(Trp). This Aquifex aeolicus (strain VF5) protein is Tryptophan--tRNA ligase.